The following is a 217-amino-acid chain: Histone H1-gamma, late (217 aa).

2 disordered regions span residues 1-21 and 80-217; these read MSAAKPKVAKKARVAPAHPPS and GKGA…PAKK. An H15 domain is found at 17–91; that stretch reads AHPPSSQMVV…GASGSFKLGK (75 aa). Residues 104 to 113 show a composition bias toward basic residues; sequence IAAKKAKLAA. The span at 114–123 shows a compositional bias: basic and acidic residues; sequence KKKEQREKKA. Basic residues predominate over residues 124 to 217; sequence LKTKARKEKV…AKKAAKPAKK (94 aa).

Belongs to the histone H1/H5 family.

The protein localises to the nucleus. It is found in the chromosome. In terms of biological role, histones H1 are necessary for the condensation of nucleosome chains into higher-order structures. In Strongylocentrotus purpuratus (Purple sea urchin), this protein is Histone H1-gamma, late.